The primary structure comprises 833 residues: Leucine--tRNA ligase (833 aa).

A 'HIGH' region motif is present at residues 41–52 (PYPSGAGLHVGH). Residues 610-614 (KMSKS) carry the 'KMSKS' region motif. Lysine 613 contacts ATP.

Belongs to the class-I aminoacyl-tRNA synthetase family.

The protein localises to the cytoplasm. The enzyme catalyses tRNA(Leu) + L-leucine + ATP = L-leucyl-tRNA(Leu) + AMP + diphosphate. The sequence is that of Leucine--tRNA ligase from Streptococcus agalactiae serotype Ia (strain ATCC 27591 / A909 / CDC SS700).